Here is a 142-residue protein sequence, read N- to C-terminus: HTH-type transcriptional regulator MntR (142 aa).

The HTH dtxR-type domain occupies 1–63; that stretch reads MPTPSMEDYI…YEKYRGLILT (63 aa). Positions 8, 11, 77, 99, 102, and 103 each coordinate Mn(2+).

This sequence belongs to the DtxR/MntR family. As to quaternary structure, homodimer.

The protein resides in the cytoplasm. With respect to regulation, DNA binding is strongly activated by Mn(2+). In terms of biological role, central regulator of manganese homeostasis. This Listeria monocytogenes serotype 4b (strain F2365) protein is HTH-type transcriptional regulator MntR.